Consider the following 325-residue polypeptide: Tagatose 1,6-diphosphate aldolase 1 (325 aa).

Belongs to the aldolase LacD family.

The catalysed reaction is D-tagatofuranose 1,6-bisphosphate = D-glyceraldehyde 3-phosphate + dihydroxyacetone phosphate. The protein operates within carbohydrate metabolism; D-tagatose 6-phosphate degradation; D-glyceraldehyde 3-phosphate and glycerone phosphate from D-tagatose 6-phosphate: step 2/2. In Streptococcus pyogenes serotype M3 (strain ATCC BAA-595 / MGAS315), this protein is Tagatose 1,6-diphosphate aldolase 1 (lacD1).